The following is a 383-amino-acid chain: E3 ubiquitin-protein ligase Os04g0590900 (383 aa).

A helical transmembrane segment spans residues 53-73 (PVFSPLVIAIIGVLASAFLLV). The segment at 105–129 (GGAGSGGRHGHGQSRSHESWNVSPP) is disordered. The RING-type; atypical zinc finger occupies 157-199 (CSVCLGEFSDGESLRLLPRCSHAFHQQCIDTWLKSHSNCPLCR). Disordered stretches follow at residues 269-291 (EANG…SSFD) and 320-383 (LLAG…DHPM).

The protein resides in the membrane. The catalysed reaction is S-ubiquitinyl-[E2 ubiquitin-conjugating enzyme]-L-cysteine + [acceptor protein]-L-lysine = [E2 ubiquitin-conjugating enzyme]-L-cysteine + N(6)-ubiquitinyl-[acceptor protein]-L-lysine.. It functions in the pathway protein modification; protein ubiquitination. Possesses E3 ubiquitin-protein ligase in vitro. This chain is E3 ubiquitin-protein ligase Os04g0590900, found in Oryza sativa subsp. japonica (Rice).